The primary structure comprises 142 residues: Cystatin-8 (142 aa).

Positions 1 to 21 (MPRCRWLSLILLTIPLALVAR) are cleaved as a signal peptide. Asn27 and Asn39 each carry an N-linked (GlcNAc...) asparagine glycan. Residues 77-81 (QVTNL) carry the Secondary area of contact motif. 2 disulfide bridges follow: Cys95–Cys105 and Cys119–Cys139.

Belongs to the cystatin family. Proximal caput region of the epididymis. Lower expression in the testis. Within the testis it is localized to the elongating spermatids, whereas within the epididymis it is exclusively synthesized by the proximal caput epithelium.

The protein localises to the secreted. Performs a specialized role during sperm development and maturation. The chain is Cystatin-8 (CST8) from Homo sapiens (Human).